Reading from the N-terminus, the 272-residue chain is 3-deoxy-manno-octulosonate cytidylyltransferase (272 aa).

It belongs to the KdsB family.

Its subcellular location is the cytoplasm. The enzyme catalyses 3-deoxy-alpha-D-manno-oct-2-ulosonate + CTP = CMP-3-deoxy-beta-D-manno-octulosonate + diphosphate. Its pathway is nucleotide-sugar biosynthesis; CMP-3-deoxy-D-manno-octulosonate biosynthesis; CMP-3-deoxy-D-manno-octulosonate from 3-deoxy-D-manno-octulosonate and CTP: step 1/1. The protein operates within bacterial outer membrane biogenesis; lipopolysaccharide biosynthesis. Activates KDO (a required 8-carbon sugar) for incorporation into bacterial lipopolysaccharide in Gram-negative bacteria. The sequence is that of 3-deoxy-manno-octulosonate cytidylyltransferase from Verminephrobacter eiseniae (strain EF01-2).